The sequence spans 430 residues: Transcription factor iws-1 (430 aa).

Over residues 1 to 14 the composition is skewed to low complexity; sequence MSDAASPAGSPAAE. The tract at residues 1 to 153 is disordered; that stretch reads MSDAASPAGS…EENLTPDERR (153 aa). A compositionally biased stretch (basic and acidic residues) spans 15-33; sequence PTEHRDEDQVNETHQDDGS. Positions 52–63 are enriched in acidic residues; that stretch reads VLSEIDENEFGD. Over residues 95–104 the composition is skewed to basic residues; the sequence is KEGRRPKKRS. Over residues 124-137 the composition is skewed to basic and acidic residues; the sequence is VRAEGERRARKEVE. The TFIIS N-terminal domain occupies 244-321; sequence QSVRYFLEPL…GEWSRLILKR (78 aa). The disordered stretch occupies residues 402-430; sequence GQAPTDHRPIGHSGHEAFRRMTQKGKGKR. Residues 406–420 are compositionally biased toward basic and acidic residues; sequence TDHRPIGHSGHEAFR.

The protein belongs to the IWS1 family.

Its subcellular location is the nucleus. Transcription factor involved in RNA polymerase II transcription regulation. May function in both SPT15/TBP post-recruitment and recruitment steps of transcription. This chain is Transcription factor iws-1 (iws-1), found in Neurospora crassa (strain ATCC 24698 / 74-OR23-1A / CBS 708.71 / DSM 1257 / FGSC 987).